The chain runs to 249 residues: Enolase-phosphatase E1 (249 aa).

This sequence belongs to the HAD-like hydrolase superfamily. MasA/MtnC family. As to quaternary structure, monomer. Requires Mg(2+) as cofactor.

The enzyme catalyses 5-methylsulfanyl-2,3-dioxopentyl phosphate + H2O = 1,2-dihydroxy-5-(methylsulfanyl)pent-1-en-3-one + phosphate. It functions in the pathway amino-acid biosynthesis; L-methionine biosynthesis via salvage pathway; L-methionine from S-methyl-5-thio-alpha-D-ribose 1-phosphate: step 3/6. Its pathway is amino-acid biosynthesis; L-methionine biosynthesis via salvage pathway; L-methionine from S-methyl-5-thio-alpha-D-ribose 1-phosphate: step 4/6. Functionally, bifunctional enzyme that catalyzes the enolization of 2,3-diketo-5-methylthiopentyl-1-phosphate (DK-MTP-1-P) into the intermediate 2-hydroxy-3-keto-5-methylthiopentenyl-1-phosphate (HK-MTPenyl-1-P), which is then dephosphorylated to form the acireductone 1,2-dihydroxy-3-keto-5-methylthiopentene (DHK-MTPene). This chain is Enolase-phosphatase E1, found in Pseudomonas aeruginosa (strain ATCC 15692 / DSM 22644 / CIP 104116 / JCM 14847 / LMG 12228 / 1C / PRS 101 / PAO1).